The chain runs to 177 residues: Large ribosomal subunit protein uL6 (177 aa).

This sequence belongs to the universal ribosomal protein uL6 family. Part of the 50S ribosomal subunit.

This protein binds to the 23S rRNA, and is important in its secondary structure. It is located near the subunit interface in the base of the L7/L12 stalk, and near the tRNA binding site of the peptidyltransferase center. This chain is Large ribosomal subunit protein uL6, found in Alkalilimnicola ehrlichii (strain ATCC BAA-1101 / DSM 17681 / MLHE-1).